Here is a 248-residue protein sequence, read N- to C-terminus: Ribonuclease PH (248 aa).

Phosphate contacts are provided by residues R86 and 124–126; that span reads GTR.

Belongs to the RNase PH family. Homohexameric ring arranged as a trimer of dimers.

It catalyses the reaction tRNA(n+1) + phosphate = tRNA(n) + a ribonucleoside 5'-diphosphate. Phosphorolytic 3'-5' exoribonuclease that plays an important role in tRNA 3'-end maturation. Removes nucleotide residues following the 3'-CCA terminus of tRNAs; can also add nucleotides to the ends of RNA molecules by using nucleoside diphosphates as substrates, but this may not be physiologically important. Probably plays a role in initiation of 16S rRNA degradation (leading to ribosome degradation) during starvation. This chain is Ribonuclease PH, found in Clostridium perfringens (strain SM101 / Type A).